The chain runs to 100 residues: Urease subunit gamma (100 aa).

The protein belongs to the urease gamma subunit family. As to quaternary structure, heterotrimer of UreA (gamma), UreB (beta) and UreC (alpha) subunits. Three heterotrimers associate to form the active enzyme.

The protein localises to the cytoplasm. The catalysed reaction is urea + 2 H2O + H(+) = hydrogencarbonate + 2 NH4(+). The protein operates within nitrogen metabolism; urea degradation; CO(2) and NH(3) from urea (urease route): step 1/1. The polypeptide is Urease subunit gamma (Vibrio parahaemolyticus).